Consider the following 253-residue polypeptide: Indole-3-glycerol phosphate synthase (253 aa).

This sequence belongs to the TrpC family.

It catalyses the reaction 1-(2-carboxyphenylamino)-1-deoxy-D-ribulose 5-phosphate + H(+) = (1S,2R)-1-C-(indol-3-yl)glycerol 3-phosphate + CO2 + H2O. It participates in amino-acid biosynthesis; L-tryptophan biosynthesis; L-tryptophan from chorismate: step 4/5. The chain is Indole-3-glycerol phosphate synthase from Bacillus anthracis (strain A0248).